Here is a 423-residue protein sequence, read N- to C-terminus: UDP-N-acetylglucosamine 1-carboxyvinyltransferase 2 (423 aa).

Position 23-24 (23-24 (KN)) interacts with phosphoenolpyruvate. Arginine 93 is a binding site for UDP-N-acetyl-alpha-D-glucosamine. The active-site Proton donor is cysteine 117. Residue cysteine 117 is modified to 2-(S-cysteinyl)pyruvic acid O-phosphothioketal. UDP-N-acetyl-alpha-D-glucosamine is bound by residues 122-126 (RPIDQ), aspartate 305, and isoleucine 327.

This sequence belongs to the EPSP synthase family. MurA subfamily.

The protein localises to the cytoplasm. The catalysed reaction is phosphoenolpyruvate + UDP-N-acetyl-alpha-D-glucosamine = UDP-N-acetyl-3-O-(1-carboxyvinyl)-alpha-D-glucosamine + phosphate. It functions in the pathway cell wall biogenesis; peptidoglycan biosynthesis. Functionally, cell wall formation. Adds enolpyruvyl to UDP-N-acetylglucosamine. This Listeria monocytogenes serotype 4b (strain F2365) protein is UDP-N-acetylglucosamine 1-carboxyvinyltransferase 2.